Here is a 333-residue protein sequence, read N- to C-terminus: Adenosine deaminase (333 aa).

Zn(2+) contacts are provided by histidine 12 and histidine 14. Histidine 14, aspartate 16, and glycine 170 together coordinate substrate. A Zn(2+)-binding site is contributed by histidine 197. Glutamate 200 acts as the Proton donor in catalysis. Residue aspartate 278 participates in Zn(2+) binding. Position 279 (aspartate 279) interacts with substrate.

It belongs to the metallo-dependent hydrolases superfamily. Adenosine and AMP deaminases family. Adenosine deaminase subfamily. Requires Zn(2+) as cofactor.

The catalysed reaction is adenosine + H2O + H(+) = inosine + NH4(+). The enzyme catalyses 2'-deoxyadenosine + H2O + H(+) = 2'-deoxyinosine + NH4(+). Its function is as follows. Catalyzes the hydrolytic deamination of adenosine and 2-deoxyadenosine. The chain is Adenosine deaminase from Photorhabdus laumondii subsp. laumondii (strain DSM 15139 / CIP 105565 / TT01) (Photorhabdus luminescens subsp. laumondii).